The sequence spans 413 residues: MQKVMNDPEDLGNCKICLQRADGIHFAVSSCRACAAFFRRTVILKLNYTCKEKGNCTVEKSLRNLCRSCRYTRCINEGMKIELVQLQRDSIGRKKSGASISIDPLFTPNVASSLSAIFKNEKEDVLSTSCTILSQMTSGYAMFLNIRRSTNTLVQSSVITPTFKMPKIELHASRFDSAKQVCKAEAHLVTDIVNSYFSPFNSLKFEDKVALFKNFFCYFSHTDRAYQSFKQFESDNLNDKILMPDGGFIKRTELGRFYENAEGVHTSAEDAAKIFQPALNYILDVIVDYMRRIHIIETEYLALLGFCLWDDAVPGLSKEAKSLAVQTQSKLLAELQNFYSSQNKDAVEITQRVGVLLLLVPKLTKCVIMLRENSVLAELFNYYEADVCCKNFKEDASVDLDCTSQCIVHTKND.

Residues 11 to 86 (LGNCKICLQR…EGMKIELVQL (76 aa)) constitute a DNA-binding region (nuclear receptor). 2 consecutive NR C4-type zinc fingers follow at residues 14-34 (CKIC…CRAC) and 50-69 (CKEK…CRSC). A required for zinc-binding region spans residues 101-412 (SIDPLFTPNV…TSQCIVHTKN (312 aa)). The NR LBD domain occupies 135–396 (QMTSGYAMFL…VCCKNFKEDA (262 aa)).

Belongs to the nuclear hormone receptor family. As to expression, weakly expressed in intestinal cells in the absence of zinc supplementation. Upon zinc supplementation, accumulates in alimentary tract cells, and it is mainly expressed in the intestine.

Its subcellular location is the nucleus. The protein resides in the cytoplasm. Its function is as follows. Nuclear receptor transcription factor that binds to DNA enhancer elements to promote the transcription of genes required to maintain micronutrient homeostasis. Direct binding to its ligand zinc allows for nuclear accumulation and activation, which thereby induces the transcription of genes required to promote the storage and detoxification of excess dietary zinc. This in turn, allows for internal zinc levels to be detected and regulated. In Caenorhabditis elegans, this protein is High zinc activated nuclear receptor protein.